A 124-amino-acid chain; its full sequence is uncharacterized protein (124 aa).

It belongs to the asfivirus H124R family.

The protein localises to the virion. This is an uncharacterized protein from Ornithodoros (relapsing fever ticks).